We begin with the raw amino-acid sequence, 307 residues long: Aspartate carbamoyltransferase catalytic subunit (307 aa).

Carbamoyl phosphate is bound by residues R59 and T60. K87 is a binding site for L-aspartate. Carbamoyl phosphate contacts are provided by R109, H139, and Q142. 2 residues coordinate L-aspartate: R172 and R224. Residues A265 and P266 each coordinate carbamoyl phosphate.

It belongs to the aspartate/ornithine carbamoyltransferase superfamily. ATCase family. In terms of assembly, heterododecamer (2C3:3R2) of six catalytic PyrB chains organized as two trimers (C3), and six regulatory PyrI chains organized as three dimers (R2).

The catalysed reaction is carbamoyl phosphate + L-aspartate = N-carbamoyl-L-aspartate + phosphate + H(+). The protein operates within pyrimidine metabolism; UMP biosynthesis via de novo pathway; (S)-dihydroorotate from bicarbonate: step 2/3. Functionally, catalyzes the condensation of carbamoyl phosphate and aspartate to form carbamoyl aspartate and inorganic phosphate, the committed step in the de novo pyrimidine nucleotide biosynthesis pathway. The protein is Aspartate carbamoyltransferase catalytic subunit of Streptococcus agalactiae serotype Ia (strain ATCC 27591 / A909 / CDC SS700).